A 230-amino-acid polypeptide reads, in one-letter code: Cytochrome c oxidase subunit 2 (230 aa).

Residues 1–14 lie on the Mitochondrial intermembrane side of the membrane; it reads MAHPSQLGFQDAAS. A helical membrane pass occupies residues 15–45; that stretch reads PVMEELLHFHDHALMIVLLISTLVLYIIVAM. Residues 46–59 are Mitochondrial matrix-facing; sequence VSTKLTNMYILDSQ. A helical transmembrane segment spans residues 60-87; the sequence is EIEIVWTVLPAVILILIALPSLRILYLM. Residues 88–230 are Mitochondrial intermembrane-facing; sequence DEINDPHLTI…KWSTMMLEDA (143 aa). Cu cation is bound by residues His-161, Cys-196, Glu-198, Cys-200, His-204, and Met-207. Glu-198 contributes to the Mg(2+) binding site.

Belongs to the cytochrome c oxidase subunit 2 family. In terms of assembly, component of the cytochrome c oxidase (complex IV, CIV), a multisubunit enzyme composed of 14 subunits. The complex is composed of a catalytic core of 3 subunits MT-CO1, MT-CO2 and MT-CO3, encoded in the mitochondrial DNA, and 11 supernumerary subunits COX4I, COX5A, COX5B, COX6A, COX6B, COX6C, COX7A, COX7B, COX7C, COX8 and NDUFA4, which are encoded in the nuclear genome. The complex exists as a monomer or a dimer and forms supercomplexes (SCs) in the inner mitochondrial membrane with NADH-ubiquinone oxidoreductase (complex I, CI) and ubiquinol-cytochrome c oxidoreductase (cytochrome b-c1 complex, complex III, CIII), resulting in different assemblies (supercomplex SCI(1)III(2)IV(1) and megacomplex MCI(2)III(2)IV(2)). Found in a complex with TMEM177, COA6, COX18, COX20, SCO1 and SCO2. Interacts with TMEM177 in a COX20-dependent manner. Interacts with COX20. Interacts with COX16. Requires Cu cation as cofactor.

The protein resides in the mitochondrion inner membrane. It carries out the reaction 4 Fe(II)-[cytochrome c] + O2 + 8 H(+)(in) = 4 Fe(III)-[cytochrome c] + 2 H2O + 4 H(+)(out). Component of the cytochrome c oxidase, the last enzyme in the mitochondrial electron transport chain which drives oxidative phosphorylation. The respiratory chain contains 3 multisubunit complexes succinate dehydrogenase (complex II, CII), ubiquinol-cytochrome c oxidoreductase (cytochrome b-c1 complex, complex III, CIII) and cytochrome c oxidase (complex IV, CIV), that cooperate to transfer electrons derived from NADH and succinate to molecular oxygen, creating an electrochemical gradient over the inner membrane that drives transmembrane transport and the ATP synthase. Cytochrome c oxidase is the component of the respiratory chain that catalyzes the reduction of oxygen to water. Electrons originating from reduced cytochrome c in the intermembrane space (IMS) are transferred via the dinuclear copper A center (CU(A)) of subunit 2 and heme A of subunit 1 to the active site in subunit 1, a binuclear center (BNC) formed by heme A3 and copper B (CU(B)). The BNC reduces molecular oxygen to 2 water molecules using 4 electrons from cytochrome c in the IMS and 4 protons from the mitochondrial matrix. In Oncorhynchus mykiss (Rainbow trout), this protein is Cytochrome c oxidase subunit 2 (mt-co2).